Here is a 194-residue protein sequence, read N- to C-terminus: Probable transcription factor At4g00130 (194 aa).

The protein belongs to the GeBP family.

The protein is Probable transcription factor At4g00130 of Arabidopsis thaliana (Mouse-ear cress).